The primary structure comprises 79 residues: Small ribosomal subunit protein bS18 (79 aa).

Belongs to the bacterial ribosomal protein bS18 family. As to quaternary structure, part of the 30S ribosomal subunit. Forms a tight heterodimer with protein bS6.

Its function is as follows. Binds as a heterodimer with protein bS6 to the central domain of the 16S rRNA, where it helps stabilize the platform of the 30S subunit. This is Small ribosomal subunit protein bS18 from Afipia carboxidovorans (strain ATCC 49405 / DSM 1227 / KCTC 32145 / OM5) (Oligotropha carboxidovorans).